The chain runs to 219 residues: Large ribosomal subunit protein uL16 (219 aa).

Belongs to the universal ribosomal protein uL16 family. In terms of assembly, component of the small ribosomal subunit. Mature ribosomes consist of a small (40S) and a large (60S) subunit. The 40S subunit contains about 33 different proteins and 1 molecule of RNA (18S). The 60S subunit contains about 49 different proteins and 3 molecules of RNA (25S, 5.8S and 5S).

The chain is Large ribosomal subunit protein uL16 (RPL10) from Solanum melongena (Eggplant).